Here is a 59-residue protein sequence, read N- to C-terminus: Potassium channel toxin alpha-KTx 4.5 (59 aa).

The first 22 residues, 1–22, serve as a signal peptide directing secretion; sequence MKAFYGVLIIFILISMLDLSQQ. Intrachain disulfides connect C29/C50, C35/C55, and C39/C57. The interaction with Ca(2+)-activated K(+) channels stretch occupies residues 48–55; that stretch reads GKCMNGKC.

As to expression, expressed by the venom gland.

The protein localises to the secreted. Inhibits with low potency Kv1.1/KCNA1, Kv1.2/KCNA2, Kv1.3/KCNA3 and Kv11.1/KCNH2/ERG1 voltage-gated potassium channels. The protein is Potassium channel toxin alpha-KTx 4.5 of Tityus costatus (Brazilian scorpion).